The primary structure comprises 596 residues: MHAYRTHNCSALRRANVGEKVRLSGWVHRKRDHGGLLFVDLRDHYGLTQIVADSDSAVFEKLDQLRLESVITVTGEVVERAPEVVNPNLATGEIEIRASEVDVQSFAQELPLPVAGEADYPEDIRLRYRYLDLRRDRLHRNIVLRSNVIASLRRRMIEQGFNEYQTPILTASSPEGARDYLVPSRVHPGKFYALPQAPQMFKQLMMVAGFDRYFQIAPCFRDEDARADRSPGEFYQLDFEMSFVTQEDVFATIEPVLAGVFEEFGGGKTVTPAPFPRIAYRDAMLYYGSDKPDLRNPLKISDVTEHFRDSGFGLFAGMVAKGGVVRAIPAPEAGKNSRKFFDDMNNWAREEGFAGLGYINIKNGEAGGPIARNLGEDATQKLLADLGLGENDGVFFAAGKEGEAARLAGLARNRVGELLDLIEKDSFRFCWVVDFPMFEYDEEAKQVIFSHNPFSMPQGGMEALETKDPLDILAYQYDIVCNGIELSSGAIRNHRPEIMYKAFEIAGYDQAMVDENFAGMINAFKYGAPPHGGAAPGVDRMVMLLAGEPNIREVVLFPMNQKAEDLMMGAPAAVSERQLKELSLRIAVKPTQKSAS.

E175 provides a ligand contact to L-aspartate. The interval 199 to 202 (QMFK) is aspartate. Residues R221 and H451 each coordinate L-aspartate. 221 to 223 (RDE) is a binding site for ATP. E485 serves as a coordination point for ATP. Residue R492 coordinates L-aspartate. ATP is bound at residue 537–540 (GVDR).

Belongs to the class-II aminoacyl-tRNA synthetase family. Type 1 subfamily. In terms of assembly, homodimer.

The protein resides in the cytoplasm. It catalyses the reaction tRNA(Asx) + L-aspartate + ATP = L-aspartyl-tRNA(Asx) + AMP + diphosphate. Aspartyl-tRNA synthetase with relaxed tRNA specificity since it is able to aspartylate not only its cognate tRNA(Asp) but also tRNA(Asn). Reaction proceeds in two steps: L-aspartate is first activated by ATP to form Asp-AMP and then transferred to the acceptor end of tRNA(Asp/Asn). The sequence is that of Aspartate--tRNA(Asp/Asn) ligase from Zymomonas mobilis subsp. mobilis (strain ATCC 31821 / ZM4 / CP4).